The following is a 37-amino-acid chain: Mating pheromone Er-20 (37 aa).

Disulfide bonds link cysteine 3/cysteine 18, cysteine 10/cysteine 32, and cysteine 15/cysteine 24.

Homodimer.

Its subcellular location is the secreted. Its function is as follows. Mating ciliate pheromones (or gamones) are diffusible extracellular communication signals that distinguish different intraspecific classes of cells commonly referred to as 'mating types'. They prepare the latter for conjugation by changing their cell surface properties. In Euplotes raikovi, this protein is Mating pheromone Er-20 (MAT20).